The sequence spans 204 residues: Peptide deformylase (204 aa).

Fe cation is bound by residues cysteine 131 and histidine 174. Glutamate 175 is a catalytic residue. Histidine 178 provides a ligand contact to Fe cation.

It belongs to the polypeptide deformylase family. Fe(2+) is required as a cofactor.

It catalyses the reaction N-terminal N-formyl-L-methionyl-[peptide] + H2O = N-terminal L-methionyl-[peptide] + formate. Functionally, removes the formyl group from the N-terminal Met of newly synthesized proteins. Requires at least a dipeptide for an efficient rate of reaction. N-terminal L-methionine is a prerequisite for activity but the enzyme has broad specificity at other positions. This Streptococcus thermophilus (strain CNRZ 1066) protein is Peptide deformylase.